The sequence spans 398 residues: tRNA(Ile)-lysidine synthase (398 aa).

Residue 17-22 (SGGPDS) participates in ATP binding.

This sequence belongs to the tRNA(Ile)-lysidine synthase family.

The protein resides in the cytoplasm. The enzyme catalyses cytidine(34) in tRNA(Ile2) + L-lysine + ATP = lysidine(34) in tRNA(Ile2) + AMP + diphosphate + H(+). In terms of biological role, ligates lysine onto the cytidine present at position 34 of the AUA codon-specific tRNA(Ile) that contains the anticodon CAU, in an ATP-dependent manner. Cytidine is converted to lysidine, thus changing the amino acid specificity of the tRNA from methionine to isoleucine. In Mesoplasma florum (strain ATCC 33453 / NBRC 100688 / NCTC 11704 / L1) (Acholeplasma florum), this protein is tRNA(Ile)-lysidine synthase.